A 418-amino-acid chain; its full sequence is Glutamyl-tRNA reductase (418 aa).

Residues 49–52 (TCNR), serine 109, 114–116 (EPQ), and glutamine 120 contribute to the substrate site. The active-site Nucleophile is cysteine 50. 189 to 194 (GAGETI) is an NADP(+) binding site.

The protein belongs to the glutamyl-tRNA reductase family. In terms of assembly, homodimer.

It carries out the reaction (S)-4-amino-5-oxopentanoate + tRNA(Glu) + NADP(+) = L-glutamyl-tRNA(Glu) + NADPH + H(+). It participates in porphyrin-containing compound metabolism; protoporphyrin-IX biosynthesis; 5-aminolevulinate from L-glutamyl-tRNA(Glu): step 1/2. Functionally, catalyzes the NADPH-dependent reduction of glutamyl-tRNA(Glu) to glutamate 1-semialdehyde (GSA). This Citrobacter koseri (strain ATCC BAA-895 / CDC 4225-83 / SGSC4696) protein is Glutamyl-tRNA reductase.